Reading from the N-terminus, the 138-residue chain is Cysteine desulfuration protein SufE (138 aa).

The active-site Cysteine persulfide intermediate is the cysteine 51.

This sequence belongs to the SufE family. As to quaternary structure, homodimer. Interacts with SufS.

It is found in the cytoplasm. It functions in the pathway cofactor biosynthesis; iron-sulfur cluster biosynthesis. Its function is as follows. Participates in cysteine desulfuration mediated by SufS. Cysteine desulfuration mobilizes sulfur from L-cysteine to yield L-alanine and constitutes an essential step in sulfur metabolism for biosynthesis of a variety of sulfur-containing biomolecules. Functions as a sulfur acceptor for SufS, by mediating the direct transfer of the sulfur atom from the S-sulfanylcysteine of SufS, an intermediate product of cysteine desulfuration process. The sequence is that of Cysteine desulfuration protein SufE from Salmonella agona (strain SL483).